Reading from the N-terminus, the 507-residue chain is MAALRVGTRAVEGRFQASNGGGGGGGGMAPSSRLVAAHREAKPRSSHSAAPWKLPRRRAGAMPLWRVAVFASVALNVATLALLLHHYATSPPPHHHHHDAGLATRSSDAAVHRRARTASSMAPSTGKPAVTTDSVINLDHGDPTMFEEFWRETGDAAEVVIPGWQTMSYFSDVTNVCWFLEPELDRQVRRLHRVVGNAAVDGYHVLVGTGSTQLFMAALYALAPDAAAAAAGEPISVVSTAPYYSSYPAVTDFLRSGLFRWAGDADAFKGDSYIELVCSPNNPDGAIREAVLDPKTGNGRTVHDLAYYWPQYTPITKRASHDIMLFTVSKSTGHAGTRIGWALVKDRAIARKMTKFVELNTIGVSKDSQMRAAKVLAAVSDGYERRPEQTKETMTTPLRLFDFGRRKMVERWSMLRAAAAASGIFSLPEETSGFCNFTKETAATNPAFAWLRCDREDVEDCAGFLRGHKILTRSGAQFGADARYVRVSMLDRDDAFDIFINRLSSLK.

Residues 91 to 135 form a disordered region; that stretch reads PPPHHHHHDAGLATRSSDAAVHRRARTASSMAPSTGKPAVTTDSV. Pyridoxal 5'-phosphate contacts are provided by residues Tyr169, 211 to 212, Asn282, 304 to 307, 327 to 330, and Arg338; these read ST, DLAY, and TVSK. Position 330 is an N6-(pyridoxal phosphate)lysine (Lys330).

It belongs to the alliinase family. It depends on pyridoxal 5'-phosphate as a cofactor. Widely expressed.

The catalysed reaction is L-tryptophan + 2-oxoglutarate = indole-3-pyruvate + L-glutamate. Its pathway is plant hormone metabolism; auxin biosynthesis. In terms of biological role, probable tryptophan aminotransferase involved in auxin (IAA) biosynthesis. Required for auxin production to initiate multiple change in growth in response to environmental and developmental cues. Functions upstream of YUCCA1 in auxin biosynthesis. Required for polar auxin transport. This is Tryptophan aminotransferase-related protein 2 from Oryza sativa subsp. japonica (Rice).